The chain runs to 421 residues: Probable sugar-binding periplasmic protein (421 aa).

The signal sequence occupies residues 1–27 (MHKLLKLAAMGTAACALLAGMAPVANA).

Belongs to the bacterial solute-binding protein 1 family.

It is found in the periplasm. Its function is as follows. Part of a binding-protein-dependent transport system for a sugar. This is Probable sugar-binding periplasmic protein from Brucella suis biovar 1 (strain 1330).